A 61-amino-acid polypeptide reads, in one-letter code: Small ribosomal subunit protein uS14 (61 aa).

4 residues coordinate Zn(2+): cysteine 24, cysteine 27, cysteine 40, and cysteine 43.

Belongs to the universal ribosomal protein uS14 family. Zinc-binding uS14 subfamily. In terms of assembly, part of the 30S ribosomal subunit. Contacts proteins S3 and S10. Requires Zn(2+) as cofactor.

Its function is as follows. Binds 16S rRNA, required for the assembly of 30S particles and may also be responsible for determining the conformation of the 16S rRNA at the A site. The protein is Small ribosomal subunit protein uS14 of Symbiobacterium thermophilum (strain DSM 24528 / JCM 14929 / IAM 14863 / T).